The chain runs to 764 residues: Nucleolar complex-associated protein 2 (764 aa).

Positions 3 to 69 (AKDDKKRVKK…EEELKRLQEK (67 aa)) form a coiled coil. Disordered stretches follow at residues 23-67 (ELNN…KRLQ), 89-113 (ATEI…EGDD), 627-646 (AVFG…DRME), and 651-726 (AFNS…EDDA). A compositionally biased stretch (basic and acidic residues) spans 30–41 (IDAHDIVMEQKS). Positions 42-51 (DKKRGKKVKS) are enriched in basic residues. Residues 52–67 (KKAEAEEHEEELKRLQ) show a composition bias toward basic and acidic residues. Positions 90 to 113 (TEIEDDADVEPDTDLEDTEKEGDD) are enriched in acidic residues. Positions 661–672 (DSKEKEPEEEKT) are enriched in basic and acidic residues. Positions 673–680 (KKKKRKRG) match the Nuclear localization signal 1 motif. The span at 673 to 682 (KKKKRKRGGK) shows a compositional bias: basic residues. Positions 693-726 (GLGEDDVVEDFVLSSDEEEEDLFDIGGDKDEDDA) are enriched in acidic residues. A Nuclear localization signal 2 motif is present at residues 738 to 745 (SKKTKGTY).

The protein belongs to the NOC2 family. Component of nucleolar complexes. Forms homodimers. Interacts with RBL and NOC3 in both the nucleolus and nucleoplasm. Binds to SWA2.

The protein resides in the nucleus. It localises to the nucleolus. Its subcellular location is the nucleoplasm. In terms of biological role, together with SWA2, probably involved in pre-ribosome export from the nucleus to the cytoplasm. This is Nucleolar complex-associated protein 2 from Arabidopsis thaliana (Mouse-ear cress).